The following is a 522-amino-acid chain: Probable G-protein coupled receptor egl-47 (522 aa).

7 helical membrane passes run 140–160 (IIKL…NSFL), 184–204 (ASMI…LSAI), 238–258 (FVFF…KVVE), 276–296 (FILV…YHLY), 345–365 (PLLL…LYFL), 398–418 (ICWA…ICST), and 472–492 (LERT…LLLF).

This sequence belongs to the G-protein coupled receptor family. In terms of tissue distribution, expressed in some neurons in the head, the HSN neurons and the PVQ interneurons of the tail.

The protein localises to the membrane. Functionally, orphan receptor. Regulates egg-laying probably by activating guanine nucleotide-binding protein goa-1, in the hermaphrodite-specific neurons (HSNs). In Caenorhabditis elegans, this protein is Probable G-protein coupled receptor egl-47.